Reading from the N-terminus, the 475-residue chain is MSPQTETKASVGFKAGVKDYKLTYYTPEYQTLDTDILAAFRVTPQPGVPPEEAGAAVAAESSTGTWTTVWTDGLTSLDRYKGRCYHIDPVPGEENQYICYVAYPLDLFEEGSVTNMFTSIVGNVFGFKALRALRLEDLRIPVAYIKTFQGPPHGIQVERDKLNKYGRPLLGCTIKPKLGLSAKNYGRAVYECLRGGLDFTKDDENVNSQPFMRWRDRFLFCAEAIYKAQAETGEIKGHYLNATAGTCEEMIKRAVFARELGVPIVMHDYITGGFTANTSLAHYCRDNGLLLHIHRAMHAVIDRQKNHGMHFRVLAKALRLSGGDHIHAGTVVGKLEGEREITLGFVDLLRDDFTEKDRSRGIYFTQSWVSTPGVLPVASGGIHVWHMPALTEIFGDDSVLQFGGGTLGHPWGNAPGAVANRVALEACVQARNEGRDLAREGNTIIREACKWSPELAAACEVWKEIKFEFQAMDTI.

The propeptide occupies 1-2 (MS). Proline 3 carries the post-translational modification N-acetylproline. The residue at position 14 (lysine 14) is an N6,N6,N6-trimethyllysine. 2 residues coordinate substrate: asparagine 123 and threonine 173. Catalysis depends on lysine 175, which acts as the Proton acceptor. Lysine 177 serves as a coordination point for substrate. Residues lysine 201, aspartate 203, and glutamate 204 each coordinate Mg(2+). Lysine 201 bears the N6-carboxylysine mark. Catalysis depends on histidine 294, which acts as the Proton acceptor. Substrate-binding residues include arginine 295, histidine 327, and serine 379.

It belongs to the RuBisCO large chain family. Type I subfamily. Heterohexadecamer of 8 large chains and 8 small chains; disulfide-linked. The disulfide link is formed within the large subunit homodimers. It depends on Mg(2+) as a cofactor. In terms of processing, the disulfide bond which can form in the large chain dimeric partners within the hexadecamer appears to be associated with oxidative stress and protein turnover.

Its subcellular location is the plastid. The protein localises to the chloroplast. The enzyme catalyses 2 (2R)-3-phosphoglycerate + 2 H(+) = D-ribulose 1,5-bisphosphate + CO2 + H2O. It catalyses the reaction D-ribulose 1,5-bisphosphate + O2 = 2-phosphoglycolate + (2R)-3-phosphoglycerate + 2 H(+). RuBisCO catalyzes two reactions: the carboxylation of D-ribulose 1,5-bisphosphate, the primary event in carbon dioxide fixation, as well as the oxidative fragmentation of the pentose substrate in the photorespiration process. Both reactions occur simultaneously and in competition at the same active site. The protein is Ribulose bisphosphate carboxylase large chain of Stellaria media (Common chickweed).